The sequence spans 139 residues: Protein archease (139 aa).

Ca(2+) contacts are provided by D12, D138, and I139.

Belongs to the archease family.

Functionally, activates the tRNA-splicing ligase complex by facilitating the enzymatic turnover of catalytic subunit RtcB. Acts by promoting the guanylylation of RtcB, a key intermediate step in tRNA ligation. Can also alter the NTP specificity of RtcB such that ATP, dGTP or ITP is used efficiently. The chain is Protein archease from Saccharolobus islandicus (strain Y.G.57.14 / Yellowstone #1) (Sulfolobus islandicus).